We begin with the raw amino-acid sequence, 110 residues long: Large ribosomal subunit protein uL24 (110 aa).

It belongs to the universal ribosomal protein uL24 family. In terms of assembly, part of the 50S ribosomal subunit.

Functionally, one of two assembly initiator proteins, it binds directly to the 5'-end of the 23S rRNA, where it nucleates assembly of the 50S subunit. In terms of biological role, one of the proteins that surrounds the polypeptide exit tunnel on the outside of the subunit. In Roseiflexus sp. (strain RS-1), this protein is Large ribosomal subunit protein uL24.